The primary structure comprises 159 residues: Transmembrane protein 42 (159 aa).

4 helical membrane passes run 37–57, 59–79, 100–120, and 124–144; these read FWGV…AASA, LAFG…VMAS, IASV…GYVL, and CQEV…TLIH.

Its subcellular location is the membrane. This is Transmembrane protein 42 (TMEM42) from Pongo abelii (Sumatran orangutan).